A 35-amino-acid polypeptide reads, in one-letter code: Photosystem II reaction center protein Y (35 aa).

Over 1-4 the chain is Lumenal; it reads MDTR. A helical transmembrane segment spans residues 5 to 23; the sequence is LLIVLLPIIAAASWAIYNI. Residues 24 to 35 are Stromal-facing; sequence GKILLLQLTKRS.

It belongs to the PsbY family. As to quaternary structure, PSII is composed of 1 copy each of membrane proteins PsbA, PsbB, PsbC, PsbD, PsbE, PsbF, PsbH, PsbI, PsbJ, PsbK, PsbL, PsbM, PsbT, PsbX, PsbY, PsbZ, Psb30/Ycf12, at least 3 peripheral proteins of the oxygen-evolving complex and a large number of cofactors. It forms dimeric complexes.

It localises to the plastid. The protein localises to the chloroplast thylakoid membrane. Loosely associated component of the core of photosystem II (PSII), it is not always seen in crystals. PSII is a light-driven water plastoquinone oxidoreductase, using light energy to abstract electrons from H(2)O, generating a proton gradient subsequently used for ATP formation. This is Photosystem II reaction center protein Y from Cyanidioschyzon merolae (strain NIES-3377 / 10D) (Unicellular red alga).